A 370-amino-acid polypeptide reads, in one-letter code: MEDLKVTPLRGVYEEYGGKIVDFAGYELPTQFKGFLHEHHTVREKAGLFDVSHMGEVMVTGKDAGKFIQYLMTNDINILKDNEVLYTFMCNEDGGVIDDLLVYKFAENEFFLVINASNKDKDVKWIMDHKGDFDVEIVDESDSIAQLALQGPLAEEILQKIVDIDLQEIKFFKLKRDVLVNGKKCLVSRTGYTGEDGFEIYCKPEDAKGLWHAILNAGKEEGVQPIGLGARDTLRFEASLLLYGNEMDETITPLEVGMGFFVKLKVEEDFIGKDALIKQKAEGVTRKLVGFELLDKGIPRHGYEVIKDGKVIGHVTTGYKSPTLNKAIGLALVEEQYSKIGTEFNIKVRKKELKAVAIDKRFYTKKTKTK.

This sequence belongs to the GcvT family. In terms of assembly, the glycine cleavage system is composed of four proteins: P, T, L and H.

The enzyme catalyses N(6)-[(R)-S(8)-aminomethyldihydrolipoyl]-L-lysyl-[protein] + (6S)-5,6,7,8-tetrahydrofolate = N(6)-[(R)-dihydrolipoyl]-L-lysyl-[protein] + (6R)-5,10-methylene-5,6,7,8-tetrahydrofolate + NH4(+). The glycine cleavage system catalyzes the degradation of glycine. In Clostridium botulinum (strain Okra / Type B1), this protein is Aminomethyltransferase.